A 294-amino-acid polypeptide reads, in one-letter code: Large ribosomal subunit protein uL2 (294 aa).

Disordered regions lie at residues 1-37 and 228-294; these read MGIRTLRPYTPSTRHMTVSDFEELSRDENGKRPRPEK and GSVM…RAAQ. The segment covering 23–37 has biased composition (basic and acidic residues); it reads ELSRDENGKRPRPEK. The segment covering 264 to 285 has biased composition (basic residues); that stretch reads KTRKRNKPSNKFIVRGRRRGGR.

Belongs to the universal ribosomal protein uL2 family. Part of the 50S ribosomal subunit. Forms a bridge to the 30S subunit in the 70S ribosome.

Its function is as follows. One of the primary rRNA binding proteins. Required for association of the 30S and 50S subunits to form the 70S ribosome, for tRNA binding and peptide bond formation. It has been suggested to have peptidyltransferase activity; this is somewhat controversial. Makes several contacts with the 16S rRNA in the 70S ribosome. The polypeptide is Large ribosomal subunit protein uL2 (Synechococcus sp. (strain JA-2-3B'a(2-13)) (Cyanobacteria bacterium Yellowstone B-Prime)).